The chain runs to 220 residues: Iron-sulfur cluster repair protein YtfE (220 aa).

This sequence belongs to the RIC family. YtfE subfamily. As to quaternary structure, homodimer.

The protein localises to the cytoplasm. Functionally, di-iron-containing protein involved in the repair of iron-sulfur clusters damaged by oxidative and nitrosative stress conditions. This chain is Iron-sulfur cluster repair protein YtfE, found in Salmonella schwarzengrund (strain CVM19633).